The following is a 37-amino-acid chain: ACNTATCVTHRLADFLSRSGGMAKNNFVPTNVGSKAF.

Cys-2 and Cys-7 are disulfide-bonded. Phe-37 carries the phenylalanine amide modification.

The protein belongs to the calcitonin family.

Functionally, CGRP induces vasodilation. It dilates a variety of vessels including the coronary, cerebral and systemic vasculature. Its abundance in the CNS also points toward a neurotransmitter or neuromodulator role. The protein is Calcitonin gene-related peptide of Pelophylax ridibundus (Marsh frog).